A 292-amino-acid chain; its full sequence is Homoserine kinase (292 aa).

An ATP-binding site is contributed by 80-90 (PLARGLGSSSS).

This sequence belongs to the GHMP kinase family. Homoserine kinase subfamily.

It is found in the cytoplasm. The catalysed reaction is L-homoserine + ATP = O-phospho-L-homoserine + ADP + H(+). It functions in the pathway amino-acid biosynthesis; L-threonine biosynthesis; L-threonine from L-aspartate: step 4/5. Catalyzes the ATP-dependent phosphorylation of L-homoserine to L-homoserine phosphate. This chain is Homoserine kinase, found in Leuconostoc mesenteroides subsp. mesenteroides (strain ATCC 8293 / DSM 20343 / BCRC 11652 / CCM 1803 / JCM 6124 / NCDO 523 / NBRC 100496 / NCIMB 8023 / NCTC 12954 / NRRL B-1118 / 37Y).